Reading from the N-terminus, the 339-residue chain is Senescence-specific cysteine protease SAG39 (339 aa).

Residues 1 to 23 (MAMAKALLFAILGCLCLCSAVLA) form the signal peptide. Intrachain disulfides connect Cys144–Cys187, Cys178–Cys220, and Cys276–Cys328. Cys147 is an active-site residue. Active-site residues include His282 and Asn303.

It belongs to the peptidase C1 family.

The protein resides in the vacuole. Its function is as follows. Cysteine protease that may have a developmental senescence specific cell death function during apoptosis, heavy metal detoxification, and hypersensitive response. In Oryza sativa subsp. indica (Rice), this protein is Senescence-specific cysteine protease SAG39.